Here is a 273-residue protein sequence, read N- to C-terminus: HUWE1-associated protein modifying stress responses 2 (273 aa).

3 disordered regions span residues 146 to 181 (GKVP…SSSV), 204 to 230 (ISMR…FLED), and 251 to 273 (KRTS…NRMV). A compositionally biased stretch (pro residues) spans 149–165 (PPAPPPPRTPRTPPKPP). Polar residues-rich tracts occupy residues 170–181 (SQAVATESSSSV), 208–218 (SGDSPQDSGVA), and 254–267 (SAQC…SPIQ). Residues 249–273 (IRKRTSAQCSDGITDSPIQKRNRMV) form a nuclear localization signal region.

Belongs to the HAPSTR1 family. Homooligomer. Heterooligomer with HAPSTR1; the interaction is direct and stabilizes HAPSTR1 independently of HUWE1. Interacts with HUWE1. As to expression, expressed in a tissue-restricted manner compared to HAPSTR1.

Its subcellular location is the nucleus. Together with HAPSTR1 plays a central regulatory role in the cellular response to molecular stressors, such as DNA damage, nutrient scarcity, and protein misfolding. Regulates these multiple stress response signaling pathways by stabilizing HAPSTR1, but also independently of HAPSTR1. This chain is HUWE1-associated protein modifying stress responses 2, found in Homo sapiens (Human).